A 429-amino-acid polypeptide reads, in one-letter code: Adenylosuccinate synthetase (429 aa).

GTP contacts are provided by residues 13-19 and 41-43; these read GDEGKGK and GHT. The active-site Proton acceptor is the Asp-14. The Mg(2+) site is built by Asp-14 and Gly-41. Residues 14 to 17, 39 to 42, Thr-130, Arg-144, Gln-225, Thr-240, and Arg-304 each bind IMP; these read DEGK and NAGH. The Proton donor role is filled by His-42. A substrate-binding site is contributed by 300 to 306; sequence ATTGRRR. GTP-binding positions include Arg-306, 332–334, and 417–419; these read KLD and STG.

It belongs to the adenylosuccinate synthetase family. Homodimer. The cofactor is Mg(2+).

The protein localises to the cytoplasm. It catalyses the reaction IMP + L-aspartate + GTP = N(6)-(1,2-dicarboxyethyl)-AMP + GDP + phosphate + 2 H(+). It participates in purine metabolism; AMP biosynthesis via de novo pathway; AMP from IMP: step 1/2. Functionally, plays an important role in the de novo pathway of purine nucleotide biosynthesis. Catalyzes the first committed step in the biosynthesis of AMP from IMP. The protein is Adenylosuccinate synthetase of Buchnera aphidicola subsp. Baizongia pistaciae (strain Bp).